Reading from the N-terminus, the 91-residue chain is uncharacterized protein (91 aa).

Positions 1–21 are cleaved as a signal peptide; sequence MKIISKMLVGALALAVTNVYA.

It belongs to the BhsA/McbA family.

The protein localises to the periplasm. This is an uncharacterized protein from Escherichia coli (strain K12).